The primary structure comprises 775 residues: Polyribonucleotide nucleotidyltransferase (775 aa).

Residues Asp487 and Asp493 each contribute to the Mg(2+) site. The KH domain maps to 554 to 613 (PKVEVVDVPEEKAPLIIGPGGSTVKKIYDETGVKVWVGEQGKVYLFVFPGGDVEKAKQMI). 2 consecutive S1 motif domains span residues 623-693 (GAVY…IGIE) and 707-775 (GDVY…TDDV).

This sequence belongs to the polyribonucleotide nucleotidyltransferase family. It depends on Mg(2+) as a cofactor.

The protein localises to the cytoplasm. The enzyme catalyses RNA(n+1) + phosphate = RNA(n) + a ribonucleoside 5'-diphosphate. In terms of biological role, involved in mRNA degradation. Catalyzes the phosphorolysis of single-stranded polyribonucleotides processively in the 3'- to 5'-direction. This Aquifex aeolicus (strain VF5) protein is Polyribonucleotide nucleotidyltransferase.